A 364-amino-acid chain; its full sequence is Medium-wave-sensitive opsin 1 (364 aa).

The interval methionine 1–threonine 23 is disordered. Over methionine 1 to valine 52 the chain is Extracellular. Residues glutamate 17–proline 43 are required for 11-cis-retinal regeneration. N-linked (GlcNAc...) asparagine glycosylation is present at asparagine 34. A helical transmembrane segment spans residues tyrosine 53–alanine 77. The Cytoplasmic portion of the chain corresponds to threonine 78–asparagine 89. A helical transmembrane segment spans residues tryptophan 90 to phenylalanine 115. Over tyrosine 116 to glutamate 129 the chain is Extracellular. Cysteine 126 and cysteine 203 are joined by a disulfide. A helical membrane pass occupies residues glycine 130–tryptophan 149. Residues glutamate 150 to leucine 168 are Cytoplasmic-facing. A helical membrane pass occupies residues alanine 169–serine 192. The Extracellular portion of the chain corresponds to arginine 193–serine 218. A helical membrane pass occupies residues tyrosine 219–isoleucine 246. Topologically, residues arginine 247–arginine 268 are cytoplasmic. A helical transmembrane segment spans residues methionine 269–threonine 292. The Extracellular segment spans residues alanine 293–histidine 300. The chain crosses the membrane as a helical span at residues proline 301–methionine 325. Lysine 312 carries the post-translational modification N6-(retinylidene)lysine. Over asparagine 326–alanine 364 the chain is Cytoplasmic.

Belongs to the G-protein coupled receptor 1 family. Opsin subfamily. Monomer. Homodimer. Homotetramer. In terms of processing, O-glycosylated. Phosphorylated on some or all of the serine and threonine residues present in the C-terminal region. In terms of tissue distribution, expressed in cone photoreceptor cells.

It localises to the membrane. Its function is as follows. Visual pigments are the light-absorbing molecules that mediate vision. They consist of an apoprotein, opsin, covalently linked to cis-retinal. May increase spectral sensitivity in dim light. The polypeptide is Medium-wave-sensitive opsin 1 (OPN1MW) (Oryctolagus cuniculus (Rabbit)).